Here is a 513-residue protein sequence, read N- to C-terminus: Light-independent protochlorophyllide reductase subunit B (513 aa).

Asp-36 is a [4Fe-4S] cluster binding site. The Proton donor role is filled by Asp-274. Position 409 to 410 (409 to 410 (GL)) interacts with substrate. The tract at residues 426 to 457 (DAAGPSHHGGHSPKPQAAEPAPQAAPQPENTG) is disordered. Residues 440–454 (PQAAEPAPQAAPQPE) show a composition bias toward low complexity.

This sequence belongs to the ChlB/BchB/BchZ family. Protochlorophyllide reductase is composed of three subunits; BchL, BchN and BchB. Forms a heterotetramer of two BchB and two BchN subunits. It depends on [4Fe-4S] cluster as a cofactor.

It catalyses the reaction chlorophyllide a + oxidized 2[4Fe-4S]-[ferredoxin] + 2 ADP + 2 phosphate = protochlorophyllide a + reduced 2[4Fe-4S]-[ferredoxin] + 2 ATP + 2 H2O. The protein operates within porphyrin-containing compound metabolism; bacteriochlorophyll biosynthesis (light-independent). Its function is as follows. Component of the dark-operative protochlorophyllide reductase (DPOR) that uses Mg-ATP and reduced ferredoxin to reduce ring D of protochlorophyllide (Pchlide) to form chlorophyllide a (Chlide). This reaction is light-independent. The NB-protein (BchN-BchB) is the catalytic component of the complex. The polypeptide is Light-independent protochlorophyllide reductase subunit B (Roseobacter denitrificans (strain ATCC 33942 / OCh 114) (Erythrobacter sp. (strain OCh 114))).